The primary structure comprises 256 residues: Type II phosphatidylinositol 4,5-bisphosphate 4-phosphatase (256 aa).

Basic and acidic residues predominate over residues 1–10; it reads MAADGIDERS. A disordered region spans residues 1 to 25; the sequence is MAADGIDERSPLISPSSGNVTPTAP. The segment covering 13–22 has biased composition (polar residues); that stretch reads ISPSSGNVTP. C106 is an active-site residue. The CX5R motif signature appears at 106-112; that stretch reads CKDISRR. Transmembrane regions (helical) follow at residues 191–211 and 226–246; these read CCTY…LTVG and WAVA…WGAI.

It localises to the late endosome membrane. The protein resides in the lysosome membrane. It catalyses the reaction a 1,2-diacyl-sn-glycero-3-phospho-(1D-myo-inositol-4,5-bisphosphate) + H2O = a 1,2-diacyl-sn-glycero-3-phospho-(1D-myo-inositol-5-phosphate) + phosphate. Catalyzes the hydrolysis of phosphatidylinositol-4,5-bisphosphate (PtdIns-4,5-P2) to phosphatidylinositol-4-phosphate (PtdIns-4-P). The chain is Type II phosphatidylinositol 4,5-bisphosphate 4-phosphatase from Xenopus laevis (African clawed frog).